Consider the following 110-residue polypeptide: UPF0060 membrane protein Bpet0062 (110 aa).

Helical transmembrane passes span 7-27 (LGLF…PYLW), 33-53 (SAWL…LLTL), 63-83 (AAYG…VDGV), and 86-106 (ATTD…IMAG).

This sequence belongs to the UPF0060 family.

The protein resides in the cell inner membrane. The sequence is that of UPF0060 membrane protein Bpet0062 from Bordetella petrii (strain ATCC BAA-461 / DSM 12804 / CCUG 43448).